Reading from the N-terminus, the 278-residue chain is Toxin coregulated pilus biosynthesis protein D (278 aa).

A helical transmembrane segment spans residues 30-50 (LLVAIIFLVLSILGGGAYLYY).

It is found in the cell membrane. Its function is as follows. Involved in TCP pilus biogenesis. The chain is Toxin coregulated pilus biosynthesis protein D (tcpD) from Vibrio cholerae serotype O1 (strain ATCC 39315 / El Tor Inaba N16961).